A 260-amino-acid chain; its full sequence is Acetylglutamate kinase (260 aa).

Residues 46-47, Arg68, and Asn160 each bind substrate; that span reads GG.

It belongs to the acetylglutamate kinase family. ArgB subfamily.

It is found in the cytoplasm. It catalyses the reaction N-acetyl-L-glutamate + ATP = N-acetyl-L-glutamyl 5-phosphate + ADP. It participates in amino-acid biosynthesis; L-arginine biosynthesis; N(2)-acetyl-L-ornithine from L-glutamate: step 2/4. Its function is as follows. Catalyzes the ATP-dependent phosphorylation of N-acetyl-L-glutamate. The chain is Acetylglutamate kinase from Shewanella sp. (strain MR-7).